Here is a 669-residue protein sequence, read N- to C-terminus: Protein adenylyltransferase SelO, mitochondrial (669 aa).

A mitochondrion-targeting transit peptide spans 1-115 (MAVYRAALGA…LGLGAPPARE (115 aa)). Residues G153, G155, K176, D188, G189, R246, and R253 each contribute to the ATP site. D338 acts as the Proton acceptor in catalysis. Residues N339 and D348 each contribute to the Mg(2+) site. D348 is an ATP binding site. A disordered region spans residues 634–654 (ATDAEATEADGADGRQRSYSS). Position 635 is a phosphothreonine (T635). S653 is subject to Phosphoserine. U667 is a non-standard amino acid (selenocysteine).

It belongs to the SELO family. The cofactor is Mg(2+).

It is found in the mitochondrion. It catalyses the reaction L-tyrosyl-[protein] + ATP = O-(5'-adenylyl)-L-tyrosyl-[protein] + diphosphate. The catalysed reaction is L-threonyl-[protein] + ATP = 3-O-(5'-adenylyl)-L-threonyl-[protein] + diphosphate. The enzyme catalyses L-seryl-[protein] + ATP = 3-O-(5'-adenylyl)-L-seryl-[protein] + diphosphate. Its function is as follows. Catalyzes the transfer of adenosine 5'-monophosphate (AMP) to Ser, Thr and Tyr residues of target proteins (AMPylation). May be a redox-active mitochondrial selenoprotein which interacts with a redox target protein. The protein is Protein adenylyltransferase SelO, mitochondrial of Homo sapiens (Human).